The chain runs to 37 residues: Large ribosomal subunit protein bL36 (37 aa).

Belongs to the bacterial ribosomal protein bL36 family.

The sequence is that of Large ribosomal subunit protein bL36 from Desulfitobacterium hafniense (strain Y51).